A 122-amino-acid polypeptide reads, in one-letter code: SVVELGKMIIQETGKSPFPSYTSYGCFCGGGERGPPLDATDRCCLAHSCCYDTLPDCSPKTDRYKYKRENGEIICENSTSCKKRICECDKAVAVCLRKNLNTYNKKYTYYPNFWCKGDIEKC.

7 disulfides stabilise this stretch: cysteine 26-cysteine 115, cysteine 28-cysteine 44, cysteine 43-cysteine 95, cysteine 49-cysteine 122, cysteine 50-cysteine 88, cysteine 57-cysteine 81, and cysteine 75-cysteine 86. The important for membrane-damaging activities in eukaryotes and bacteria; heparin-binding stretch occupies residues lysine 105–glycine 117.

As to expression, expressed by the venom gland.

It is found in the secreted. Its activity is regulated as follows. Suramin inhibits the myotoxic activity. Functionally, snake venom phospholipase A2 homolog that lacks enzymatic activity. Shows high myotoxin activities and displays edema-inducing activities. This Echis carinatus (Saw-scaled viper) protein is Basic phospholipase A2 homolog ecarpholin S.